A 256-amino-acid chain; its full sequence is Homeobox-leucine zipper protein HOX18 (256 aa).

Positions 52 to 116 are disordered; the sequence is YDHGRDEEQA…GGGGGGTRKK (65 aa). Residues 102-112 are compositionally biased toward gly residues; the sequence is DGGSGGGGGGG. The segment at residues 112-171 is a DNA-binding region (homeobox); sequence GTRKKLQLTKEQSTLLEDSFRVHNILSHAQKHELARQLKLKPRQVEVWFQNRRARTKLKQ. Residues 170–214 form a leucine-zipper region; the sequence is KQTEVDCEFLKRCCESLTEENKQLKHELMELRRLASPAAAAAGSQ.

This sequence belongs to the HD-ZIP homeobox family. Class II subfamily. In terms of tissue distribution, expressed in roots, leaf sheaths and blades and panicles.

The protein resides in the nucleus. Functionally, probable transcription factor. The protein is Homeobox-leucine zipper protein HOX18 (HOX18) of Oryza sativa subsp. japonica (Rice).